Consider the following 541-residue polypeptide: Developmental and secondary metabolism regulator VEL1 (541 aa).

Positions 26-220 (NRHLWYQLTV…ADQGCRVRIR (195 aa)) constitute a Velvet domain. The short motif at 40–45 (ERARAC) is the Nuclear localization signal element. Disordered regions lie at residues 222–447 (DVRM…MPTQ) and 464–483 (PIEAQTEPLPPPPLLPTGGK). Over residues 230–244 (GKGSGYDRREEEYAR) the composition is skewed to basic and acidic residues. Residues 289-298 (APSLPHAPSL) show a composition bias toward low complexity. 3 stretches are compositionally biased toward pro residues: residues 299–314 (PHAPPPPAYDAPPPAA), 345–355 (APIPPVTPTGP), and 425–439 (SPAPMTPYIAPPAPS). Residues 444 to 472 (MPTQSSLAPLKIASLVSPLPPIEAQTEPL) form a PEST region.

The protein belongs to the velvet family. VeA subfamily. In terms of assembly, component of the heterotrimeric velvet complex composed of LAE1, VEL1 and VEL2; VEL1 acting as a bridging protein between LAE1 and VEL2.

Its subcellular location is the nucleus. It is found in the cytoplasm. Its function is as follows. Component of the velvet transcription factor complex that controls sexual/asexual developmental ratio in response to light, promoting sexual development in the darkness while stimulating asexual sporulation under illumination. The velvet complex acts as a global regulator for secondary metabolite gene expression. Controls the expression of the gliotoxin gene cluster. Plays a key role in mycoparasitism. The polypeptide is Developmental and secondary metabolism regulator VEL1 (Hypocrea virens (strain Gv29-8 / FGSC 10586) (Gliocladium virens)).